The primary structure comprises 257 residues: UPF0246 protein Ent638_0568 (257 aa).

This sequence belongs to the UPF0246 family.

In Enterobacter sp. (strain 638), this protein is UPF0246 protein Ent638_0568.